We begin with the raw amino-acid sequence, 146 residues long: Anti-sigma F factor (146 aa).

It belongs to the anti-sigma-factor family.

The catalysed reaction is L-seryl-[protein] + ATP = O-phospho-L-seryl-[protein] + ADP + H(+). It catalyses the reaction L-threonyl-[protein] + ATP = O-phospho-L-threonyl-[protein] + ADP + H(+). Functionally, binds to sigma F and blocks its ability to form an RNA polymerase holoenzyme (E-sigma F). Phosphorylates SpoIIAA on a serine residue. This phosphorylation may enable SpoIIAA to act as an anti-anti-sigma factor that counteracts SpoIIAB and thus releases sigma F from inhibition. The chain is Anti-sigma F factor from Geobacillus stearothermophilus (Bacillus stearothermophilus).